Here is a 152-residue protein sequence, read N- to C-terminus: Xanthine-guanine phosphoribosyltransferase (152 aa).

Residues 37–38 (RG), Arg-69, and 88–96 (DDLVDTGGT) each bind 5-phospho-alpha-D-ribose 1-diphosphate. GMP is bound at residue Arg-69. Asp-89 provides a ligand contact to Mg(2+). The guanine site is built by Asp-92 and Ile-135. Residues Asp-92 and Ile-135 each contribute to the xanthine site. GMP is bound by residues 92-96 (DTGGT) and 134-135 (WI).

It belongs to the purine/pyrimidine phosphoribosyltransferase family. XGPT subfamily. In terms of assembly, homotetramer. Mg(2+) is required as a cofactor.

The protein localises to the cell inner membrane. It carries out the reaction GMP + diphosphate = guanine + 5-phospho-alpha-D-ribose 1-diphosphate. The catalysed reaction is XMP + diphosphate = xanthine + 5-phospho-alpha-D-ribose 1-diphosphate. The enzyme catalyses IMP + diphosphate = hypoxanthine + 5-phospho-alpha-D-ribose 1-diphosphate. The protein operates within purine metabolism; GMP biosynthesis via salvage pathway; GMP from guanine: step 1/1. Its pathway is purine metabolism; XMP biosynthesis via salvage pathway; XMP from xanthine: step 1/1. Its function is as follows. Purine salvage pathway enzyme that catalyzes the transfer of the ribosyl-5-phosphate group from 5-phospho-alpha-D-ribose 1-diphosphate (PRPP) to the N9 position of the 6-oxopurines guanine and xanthine to form the corresponding ribonucleotides GMP (guanosine 5'-monophosphate) and XMP (xanthosine 5'-monophosphate), with the release of PPi. To a lesser extent, also acts on hypoxanthine. In Enterobacter sp. (strain 638), this protein is Xanthine-guanine phosphoribosyltransferase.